Consider the following 411-residue polypeptide: LL-diaminopimelate aminotransferase 1 (411 aa).

Residues Y15 and G42 each coordinate substrate. Pyridoxal 5'-phosphate is bound by residues Y72, 108 to 109 (SK), Y132, N187, Y218, and 246 to 248 (SFS). Positions 109, 132, and 187 each coordinate substrate. At K249 the chain carries N6-(pyridoxal phosphate)lysine. Pyridoxal 5'-phosphate contacts are provided by R257 and N292. Substrate is bound by residues N292 and R388.

Belongs to the class-I pyridoxal-phosphate-dependent aminotransferase family. LL-diaminopimelate aminotransferase subfamily. Homodimer. Requires pyridoxal 5'-phosphate as cofactor.

It carries out the reaction (2S,6S)-2,6-diaminopimelate + 2-oxoglutarate = (S)-2,3,4,5-tetrahydrodipicolinate + L-glutamate + H2O + H(+). It participates in amino-acid biosynthesis; L-lysine biosynthesis via DAP pathway; LL-2,6-diaminopimelate from (S)-tetrahydrodipicolinate (aminotransferase route): step 1/1. Its function is as follows. Involved in the synthesis of meso-diaminopimelate (m-DAP or DL-DAP), required for both lysine and peptidoglycan biosynthesis. Catalyzes the direct conversion of tetrahydrodipicolinate to LL-diaminopimelate. The sequence is that of LL-diaminopimelate aminotransferase 1 from Nostoc sp. (strain PCC 7120 / SAG 25.82 / UTEX 2576).